Here is a 715-residue protein sequence, read N- to C-terminus: Fatty acid oxidation complex subunit alpha (715 aa).

Residues 1–189 are enoyl-CoA hydratase/isomerase; sequence MIYQGETLSV…KVGAIDAVVA (189 aa). D296 is a binding site for substrate. The segment at 311–715 is 3-hydroxyacyl-CoA dehydrogenase; sequence AKATRHAAVL…EMAAQGKTFY (405 aa). NAD(+) is bound by residues M325, D344, 401–403, K408, and S430; that span reads VVE. H451 (for 3-hydroxyacyl-CoA dehydrogenase activity) is an active-site residue. Residue N454 coordinates NAD(+). 2 residues coordinate substrate: N501 and Y661.

It in the N-terminal section; belongs to the enoyl-CoA hydratase/isomerase family. In the C-terminal section; belongs to the 3-hydroxyacyl-CoA dehydrogenase family. As to quaternary structure, heterotetramer of two alpha chains (FadB) and two beta chains (FadA).

It catalyses the reaction a (3S)-3-hydroxyacyl-CoA + NAD(+) = a 3-oxoacyl-CoA + NADH + H(+). It carries out the reaction a (3S)-3-hydroxyacyl-CoA = a (2E)-enoyl-CoA + H2O. The catalysed reaction is a 4-saturated-(3S)-3-hydroxyacyl-CoA = a (3E)-enoyl-CoA + H2O. The enzyme catalyses (3S)-3-hydroxybutanoyl-CoA = (3R)-3-hydroxybutanoyl-CoA. It catalyses the reaction a (3Z)-enoyl-CoA = a 4-saturated (2E)-enoyl-CoA. It carries out the reaction a (3E)-enoyl-CoA = a 4-saturated (2E)-enoyl-CoA. Its pathway is lipid metabolism; fatty acid beta-oxidation. Its function is as follows. Involved in the aerobic and anaerobic degradation of long-chain fatty acids via beta-oxidation cycle. Catalyzes the formation of 3-oxoacyl-CoA from enoyl-CoA via L-3-hydroxyacyl-CoA. It can also use D-3-hydroxyacyl-CoA and cis-3-enoyl-CoA as substrate. This is Fatty acid oxidation complex subunit alpha from Aeromonas salmonicida (strain A449).